The sequence spans 246 residues: Azurocidin (246 aa).

An N-terminal signal peptide occupies residues 1-19; it reads MPALRFLALLASLLATSRV. Residues 20 to 26 constitute a propeptide that is removed on maturation; the sequence is GLATLAD. The Peptidase S1 domain occupies 27–242; it reads IVGGRRAQPQ…FRNWIDSVLN (216 aa). The cysteines at positions 52 and 68 are disulfide-linked. N-linked (GlcNAc...) asparagine glycans are attached at residues Asn-139 and Asn-170. 2 disulfide bridges follow: Cys-148–Cys-205 and Cys-178–Cys-184. A propeptide spanning residues 245 to 246 is cleaved from the precursor; it reads PA.

The protein belongs to the peptidase S1 family. Elastase subfamily.

The protein localises to the cytoplasmic granule membrane. Functionally, this is a neutrophil granule-derived antibacterial and monocyte- and fibroblast-specific chemotactic glycoprotein. Binds heparin. The polypeptide is Azurocidin (Sus scrofa (Pig)).